A 168-amino-acid chain; its full sequence is Photosystem I assembly protein Ycf3 (168 aa).

TPR repeat units lie at residues 35 to 68 (AFTYYRDGMSAQSEGNYAEALQNYYEATRLEIDP), 72 to 105 (SYILYNIGLIHTSNGEHTKALEYYFRALERNPFL), and 120 to 153 (GEQAIQQGDSEIAESWFDQAAEYWKQAIALTPGN).

It belongs to the Ycf3 family.

Its subcellular location is the plastid. It is found in the chloroplast thylakoid membrane. Functionally, essential for the assembly of the photosystem I (PSI) complex. May act as a chaperone-like factor to guide the assembly of the PSI subunits. The sequence is that of Photosystem I assembly protein Ycf3 from Nandina domestica (Heavenly bamboo).